We begin with the raw amino-acid sequence, 336 residues long: Ethanol acetyltransferase 1 (336 aa).

Residues 1–14 (MFPTRVLRSTLQKL) constitute a mitochondrion transit peptide. Residues 44 to 296 (PIVFLHGIFG…VNSSHDILDQ (253 aa)) enclose the AB hydrolase-1 domain. Active-site charge relay system residues include serine 117, aspartate 141, and histidine 291.

It belongs to the AB hydrolase superfamily.

Its subcellular location is the mitochondrion. It catalyses the reaction ethanol + acetyl-CoA = ethyl acetate + CoA. It carries out the reaction acetyl-CoA + H2O = acetate + CoA + H(+). The enzyme catalyses ethyl acetate + H2O = ethanol + acetate + H(+). Its function is as follows. Alcohol acetyltransferase that catalyzes the synthesis of ethyl acetate from ethanol and acetyl-CoA. Can also function as a thioesterase by hydrolyzing acetyl-CoA in the absence of ethanol, as well as esterase hydrolyzing ethyl acetate. This is Ethanol acetyltransferase 1 (EAT1) from Cyberlindnera jadinii (strain ATCC 18201 / CBS 1600 / BCRC 20928 / JCM 3617 / NBRC 0987 / NRRL Y-1542) (Torula yeast).